The following is a 92-amino-acid chain: Large ribosomal subunit protein bL25 (92 aa).

The protein belongs to the bacterial ribosomal protein bL25 family. Part of the 50S ribosomal subunit; part of the 5S rRNA/L5/L18/L25 subcomplex. Contacts the 5S rRNA. Binds to the 5S rRNA independently of L5 and L18.

This is one of the proteins that binds to the 5S RNA in the ribosome where it forms part of the central protuberance. This is Large ribosomal subunit protein bL25 from Photobacterium damsela subsp. piscicida (Pasteurella piscicida).